The sequence spans 516 residues: Methionine--tRNA ligase (516 aa).

Positions 14-24 match the 'HIGH' region motif; sequence SYPNGKPHIGH. The 'KMSKS' region motif lies at 302–306; it reads KMSKS. Lys-305 is an ATP binding site.

Belongs to the class-I aminoacyl-tRNA synthetase family. MetG type 2B subfamily. Monomer.

Its subcellular location is the cytoplasm. It catalyses the reaction tRNA(Met) + L-methionine + ATP = L-methionyl-tRNA(Met) + AMP + diphosphate. Its function is as follows. Is required not only for elongation of protein synthesis but also for the initiation of all mRNA translation through initiator tRNA(fMet) aminoacylation. The chain is Methionine--tRNA ligase from Rhizobium meliloti (strain 1021) (Ensifer meliloti).